Reading from the N-terminus, the 398-residue chain is Heat-inducible transcription repressor HrcA (398 aa).

Belongs to the HrcA family.

Its function is as follows. Negative regulator of class I heat shock genes (grpE-dnaK-dnaJ and groELS operons). Prevents heat-shock induction of these operons. This chain is Heat-inducible transcription repressor HrcA, found in Chlamydia pneumoniae (Chlamydophila pneumoniae).